The following is a 171-amino-acid chain: Co-chaperone protein HscB homolog (171 aa).

Residues 2 to 74 (NHFELFGLPP…ISRAEYLLSQ (73 aa)) form the J domain.

This sequence belongs to the HscB family. In terms of assembly, interacts with HscA and stimulates its ATPase activity.

Co-chaperone involved in the maturation of iron-sulfur cluster-containing proteins. Seems to help targeting proteins to be folded toward HscA. The protein is Co-chaperone protein HscB homolog of Vibrio vulnificus (strain YJ016).